The following is a 144-amino-acid chain: Mercuric transport protein MerC (144 aa).

The Cytoplasmic segment spans residues 1-21 (MSAITRIIDKIGIVGTIVGSF). The chain crosses the membrane as a helical span at residues 22 to 42 (SCAMCFPAAASLGAAIGLGFL). 2 residues coordinate Hg(2+): Cys23 and Cys26. At 43-46 (SQWE) the chain is on the periplasmic side. A helical transmembrane segment spans residues 47 to 67 (GLFVQWLIPIFASVALLATLA). Residues 68 to 78 (GWFSHRQWQRT) lie on the Cytoplasmic side of the membrane. The helical transmembrane segment at 79 to 99 (LLGSIGPVLALVGVFGLTHHF) threads the bilayer. The Periplasmic segment spans residues 100–103 (LDKD). A helical membrane pass occupies residues 104–124 (LARVIFYTGLVVMFLVSIWDM). Residues 125-144 (VNPANRRCATDGCETPAPRS) are Cytoplasmic-facing.

In terms of assembly, monomer.

It localises to the cell inner membrane. With respect to regulation, inhibited by the thiol-modifying reagent N-ethylmaleimide (NEM). Its function is as follows. Involved in mercuric ion uptake. The polypeptide is Mercuric transport protein MerC (Acidithiobacillus ferrooxidans (Thiobacillus ferrooxidans)).